The sequence spans 145 residues: MQNQQEEISSTQTTTIEVLPPVLQLRASRDQPSRHDVRWGTDVIDNENMNKKKTKICCIYHPQDEDEEGCTSDHQHEEPPESSSSSSSESENDKDLGFDERRKRRVERRRRKLRDNTDSAPNAYEVQPDYSEHRKKMMEKKSNNT.

Over residues 1–17 (MQNQQEEISSTQTTTIE) the composition is skewed to low complexity. Disordered regions lie at residues 1–41 (MQNQ…RWGT) and 64–145 (DEDE…SNNT). 2 stretches are compositionally biased toward basic and acidic residues: residues 27-39 (ASRD…DVRW) and 91-101 (ENDKDLGFDER). The span at 102 to 113 (RKRRVERRRRKL) shows a compositional bias: basic residues.

Belongs to the YPI1 family.

Its subcellular location is the nucleus. Functionally, regulator of type 1 phosphatases which maintains protein phosphatase activity under strict control. The sequence is that of Type 1 phosphatases regulator YPI1 (YPI1) from Vanderwaltozyma polyspora (strain ATCC 22028 / DSM 70294 / BCRC 21397 / CBS 2163 / NBRC 10782 / NRRL Y-8283 / UCD 57-17) (Kluyveromyces polysporus).